We begin with the raw amino-acid sequence, 86 residues long: Precursor of CEP4 (86 aa).

The N-terminal stretch at 1–30 (MVSRGCSITVLFRFLIVLLVIQVHFENTKA) is a signal peptide. Positions 31–64 (ARHAPVVSWSPPEPPKDDFVWYHKINRFKNIEQD) are excised as a propeptide. Residues 63-86 (QDAFRPTHQGPSQGIGHKNPPGAP) form a disordered region. Residues Pro68 and Pro73 each carry the hydroxyproline modification. Residues 80 to 86 (KNPPGAP) constitute a propeptide that is removed on maturation.

Belongs to the C-terminally encoded plant signaling peptide (CEP) family. As to quaternary structure, interacts with CEP receptors (e.g. CEPR1 and CEPR2). Post-translationally, the mature small signaling peptide is generated by proteolytic processing of the longer precursor. Expressed at low levels in flowers. Present in lateral roots, shoot apical meristem (SAM), flowers and siliques.

The protein resides in the secreted. Its subcellular location is the extracellular space. It localises to the apoplast. Functionally, extracellular signaling peptide that represses primary root growth rate. Promotes shoot growth and modulates leaf morphology. Regulates systemic nitrogen (N)-demand signaling. Mediates up-regulation of genes involved in N uptake and assimilation pathways. This chain is Precursor of CEP4, found in Arabidopsis thaliana (Mouse-ear cress).